Reading from the N-terminus, the 218-residue chain is Capsid protein (218 aa).

M1 is modified (N-acetylmethionine; by host). Positions M1–A28 are disordered. A compositionally biased stretch (basic residues) spans R11–S21.

It belongs to the cucumovirus capsid protein family.

The protein resides in the virion. Its function is as follows. Capsid protein. Probably binds RNA and plays a role in packaging. The polypeptide is Capsid protein (Cucumis sativus (Cucumber)).